A 570-amino-acid polypeptide reads, in one-letter code: Urease subunit alpha (570 aa).

A Urease domain is found at 131-570 (GGFDSHIHFI…LPLAQRYFMF (440 aa)). Ni(2+) contacts are provided by His136, His138, and Lys219. Lys219 bears the N6-carboxylysine mark. His221 is a binding site for substrate. His248 and His274 together coordinate Ni(2+). The Proton donor role is filled by His322. Asp362 is a Ni(2+) binding site.

It belongs to the metallo-dependent hydrolases superfamily. Urease alpha subunit family. In terms of assembly, heterotrimer of UreA (gamma), UreB (beta) and UreC (alpha) subunits. Three heterotrimers associate to form the active enzyme. It depends on Ni cation as a cofactor. In terms of processing, carboxylation allows a single lysine to coordinate two nickel ions.

It localises to the cytoplasm. The catalysed reaction is urea + 2 H2O + H(+) = hydrogencarbonate + 2 NH4(+). It functions in the pathway nitrogen metabolism; urea degradation; CO(2) and NH(3) from urea (urease route): step 1/1. This Rhodopseudomonas palustris (strain TIE-1) protein is Urease subunit alpha.